The sequence spans 507 residues: MGPPLAQELTQACNQPLAATSNLQPDDGYKIELRAENTVDKYPAKQHARRVAAQIRQGKGLIFLMGQKSTLHEDSDQERSLRQRRYFFYLSGVDEADCDLTYDIKTDKLTLYVPDFDLRRAIWMGPTLERKAALQKFDVDEVNYHSSLDEDVKKWAKNQDPGSTIYLLHGSQGPAENPPNVIIDSKALKLAMDACRVIKDEHEIQLIRRANDISAAAHLEILRGITSMSNESHIEGSFLNTCVSLGAHNQAYQIIAASGSNAATLHYSKNNEPLKGRQFVCLDAGAEWNCYASDVTRTFPITHQWPSIEAKQIYQLVQEMQESCIALVKEGVRYLDLHFLAHNILIKGFLTLGIFKGGTLDEVKKSGASLLFFPHGLGHHIGLEVHDVSPQSIMAQGINDDSNNKLILPTCVSPCTTSSPALTSGMVITIEPGIYFSQLALDNAKPEQLKYIDMARVKNYMAVGGVRIEDDILVTKTGHENLTKVPKGDDMLEIIRQGKKGNDSHHV.

The Mn(2+) site is built by aspartate 283, aspartate 294, glutamate 431, and glutamate 469.

Belongs to the peptidase M24B family. Mn(2+) is required as a cofactor.

It carries out the reaction Release of any N-terminal amino acid, including proline, that is linked to proline, even from a dipeptide or tripeptide.. In terms of biological role, catalyzes the removal of a penultimate prolyl residue from the N-termini of peptides. The polypeptide is Probable Xaa-Pro aminopeptidase HCBG_01484 (Ajellomyces capsulatus (strain G186AR / H82 / ATCC MYA-2454 / RMSCC 2432) (Darling's disease fungus)).